We begin with the raw amino-acid sequence, 330 residues long: 3',5'-cyclic-nucleotide phosphodiesterase (330 aa).

Positions 1–22 are cleaved as a signal peptide; sequence MFKNKLAVLFTCLSVFSFSAQS.

It belongs to the cyclic nucleotide phosphodiesterase class-II family.

The protein resides in the periplasm. The enzyme catalyses a nucleoside 3',5'-cyclic phosphate + H2O = a nucleoside 5'-phosphate + H(+). Its function is as follows. Seems to allow the organism to grow on cAMP. The chain is 3',5'-cyclic-nucleotide phosphodiesterase (cpdP) from Aliivibrio fischeri (Vibrio fischeri).